Consider the following 350-residue polypeptide: Renin receptor (350 aa).

The signal sequence occupies residues Met1–Gly16. Residues Asn17 to Glu302 lie on the Extracellular side of the membrane. A helical transmembrane segment spans residues Tyr303–Ile323. Residues Thr324 to Asp350 lie on the Cytoplasmic side of the membrane. The Mediates retrograde transport to the ER motif lies at Lys346–Asp350.

Interacts with renin. Accessory component of the multisubunit proton-transporting vacuolar (V)-ATPase protein pump. Interacts (via N-terminus) with ATP6AP1 (via N-terminus). Interacts with ATP6V0D1; ATP6V0D1 is a V-ATPase complex subunit and the interaction promotes V-ATPase complex assembly. Interacts with TMEM9; TMEM9 is a V-ATPase assembly regulator and the interaction induces the interaction with ATP6V0D1. Interacts with VMA21 (via N-terminus); VMA21 is a V-ATPase accessory component. In terms of processing, phosphorylated. Post-translationally, proteolytically cleaved by a furin-like convertase in the trans-Golgi network to generate N- and C-terminal fragments. As to expression, expressed in brain, heart, placenta, liver, kidney and pancreas. Barely detectable in lung and skeletal muscles. In the kidney cortex it is restricted to the mesangium of glomeruli. In the coronary and kidney artery it is expressed in the subendothelium, associated to smooth muscles where it colocalizes with REN. Expressed in vascular structures and by syncytiotrophoblast cells in the mature fetal placenta.

It is found in the endoplasmic reticulum membrane. Its subcellular location is the lysosome membrane. The protein resides in the cytoplasmic vesicle. The protein localises to the autophagosome membrane. It localises to the cell projection. It is found in the dendritic spine membrane. Its subcellular location is the axon. The protein resides in the endosome membrane. The protein localises to the clathrin-coated vesicle membrane. It localises to the secretory vesicle. It is found in the synaptic vesicle membrane. In terms of biological role, multifunctional protein which functions as a renin, prorenin cellular receptor and is involved in the assembly of the lysosomal proton-transporting V-type ATPase (V-ATPase) and the acidification of the endo-lysosomal system. May mediate renin-dependent cellular responses by activating ERK1 and ERK2. By increasing the catalytic efficiency of renin in AGT/angiotensinogen conversion to angiotensin I, may also play a role in the renin-angiotensin system (RAS). Through its function in V-type ATPase (v-ATPase) assembly and acidification of the lysosome it regulates protein degradation and may control different signaling pathways important for proper brain development, synapse morphology and synaptic transmission. The sequence is that of Renin receptor from Homo sapiens (Human).